Here is a 692-residue protein sequence, read N- to C-terminus: Elongation factor G (692 aa).

The tr-type G domain maps to 8-283 (DHVRNIGIMA…AVVDYFPSPS (276 aa)). Residues 17 to 24 (AHIDAGKT), 81 to 85 (DTPGH), and 135 to 138 (NKMD) contribute to the GTP site.

Belongs to the TRAFAC class translation factor GTPase superfamily. Classic translation factor GTPase family. EF-G/EF-2 subfamily.

The protein resides in the cytoplasm. In terms of biological role, catalyzes the GTP-dependent ribosomal translocation step during translation elongation. During this step, the ribosome changes from the pre-translocational (PRE) to the post-translocational (POST) state as the newly formed A-site-bound peptidyl-tRNA and P-site-bound deacylated tRNA move to the P and E sites, respectively. Catalyzes the coordinated movement of the two tRNA molecules, the mRNA and conformational changes in the ribosome. This is Elongation factor G from Magnetococcus marinus (strain ATCC BAA-1437 / JCM 17883 / MC-1).